Here is a 283-residue protein sequence, read N- to C-terminus: 32 kDa beta-galactoside-binding lectin (283 aa).

Galectin domains follow at residues 17-148 (YRSL…VHWG) and 156-283 (YESG…IQIQ). 217 to 223 (WGNEERE) is an a beta-D-galactoside binding site.

As to quaternary structure, (Microbial infection) Interacts (via domain galectin 2) with goat TMEM147. Interacts (via domain galectin 1) with goat TMEM63A.

Its subcellular location is the membrane. Binds galactose. Exerts immunomodulatory effects on host peripheral blood mononuclear cells to down-regulate host immune response. Hemagglutinates human, dog, rabbit, chicken and mouse erythrocytes but does not hemagglutinate the erythrocytes of goat, its natural host. The polypeptide is 32 kDa beta-galactoside-binding lectin (GAL-1) (Haemonchus contortus (Barber pole worm)).